Reading from the N-terminus, the 217-residue chain is uncharacterized protein (217 aa).

This sequence to M.tuberculosis Rv2926c.

This is an uncharacterized protein from Mycobacterium leprae (strain TN).